Reading from the N-terminus, the 189-residue chain is dCTP deaminase (189 aa).

DCTP-binding positions include 112–117, 136–138, Gln-157, Tyr-171, and Gln-181; these read KSTYAR and TLE. Catalysis depends on Glu-138, which acts as the Proton donor/acceptor.

It belongs to the dCTP deaminase family. As to quaternary structure, homotrimer.

The enzyme catalyses dCTP + H2O + H(+) = dUTP + NH4(+). It functions in the pathway pyrimidine metabolism; dUMP biosynthesis; dUMP from dCTP (dUTP route): step 1/2. Catalyzes the deamination of dCTP to dUTP. In Albidiferax ferrireducens (strain ATCC BAA-621 / DSM 15236 / T118) (Rhodoferax ferrireducens), this protein is dCTP deaminase.